The primary structure comprises 367 residues: 2-oxoisovalerate dehydrogenase subunit alpha (367 aa).

Residues Phe66, Tyr95, 128–131 (MPEH), and Ser144 contribute to the substrate site. A thiamine diphosphate-binding site is contributed by 94 to 96 (YYR). Thiamine diphosphate is bound by residues 144-146 (SPI), 174-180 (GDGATSE), 204-208 (NFYAI), and His273. Mg(2+) is bound by residues Asp175, Asn204, and Tyr206.

This sequence belongs to the BCKDHA family. As to quaternary structure, heterotetramer of two alpha and two beta chains. Directly associated with ODBB in the E1 complex. Thiamine diphosphate serves as cofactor.

It carries out the reaction N(6)-[(R)-lipoyl]-L-lysyl-[protein] + 3-methyl-2-oxobutanoate + H(+) = N(6)-[(R)-S(8)-2-methylpropanoyldihydrolipoyl]-L-lysyl-[protein] + CO2. Functionally, the branched-chain alpha-keto dehydrogenase complex catalyzes the overall conversion of alpha-keto acids to acyl-CoA and CO(2). It contains multiple copies of three enzymatic components: branched-chain alpha-keto acid decarboxylase (E1), lipoamide acyltransferase (E2) and lipoamide dehydrogenase (E3). This Thermus thermophilus (strain ATCC BAA-163 / DSM 7039 / HB27) protein is 2-oxoisovalerate dehydrogenase subunit alpha.